The sequence spans 416 residues: CinA-like protein (416 aa).

It belongs to the CinA family.

The protein is CinA-like protein of Amoebophilus asiaticus (strain 5a2).